The following is a 655-amino-acid chain: THO complex subunit 1 (655 aa).

Disordered stretches follow at residues 403-427 (ERPA…LGKG) and 539-574 (PSEE…AVTN). The Nuclear localization signal motif lies at 415 to 431 (RKRQAPEDFLGKGPDRK). Over residues 418–427 (QAPEDFLGKG) the composition is skewed to basic and acidic residues. Over residues 563 to 574 (DSPSIQSKAVTN) the composition is skewed to polar residues. The region spanning 573–655 (TNSQMDEIAA…NNIADNLSET (83 aa)) is the Death domain.

In terms of assembly, component of the THO complex. As to expression, expressed in the developing neuromast.

It localises to the nucleus. Its subcellular location is the nucleoplasm. The protein localises to the nucleus matrix. The protein resides in the cytoplasm. It is found in the cytosol. Its function is as follows. Component of the THO subcomplex of the TREX complex which is thought to couple mRNA transcription, processing and nuclear export, and which specifically associates with spliced mRNA and not with unspliced pre-mRNA. Required for efficient export of polyadenylated RNA. The THOC1-THOC2-THOC3 core complex alone is sufficient to bind export factor NXF1-NXT1 and promote ATPase activity of DDX39B. TREX is recruited to spliced mRNAs by a transcription-independent mechanism, binds to mRNA upstream of the exon-junction complex (EJC) and is recruited in a splicing- and cap-dependent manner to a region near the 5' end of the mRNA where it functions in mRNA export to the cytoplasm via the TAP/NXF1 pathway. Regulates transcriptional elongation of a subset of genes. Involved in genome stability by preventing co-transcriptional R-loop formation. May play a role in hair cell formation, hence may be involved in hearing. Functionally, participates in an apoptotic pathway which is characterized by activation of caspase-6, increases in the expression of BAK1 and BCL2L1 and activation of NF-kappa-B. This pathway does not require p53/TP53, nor does the presence of p53/TP53 affect the efficiency of cell killing. Activates a G2/M cell cycle checkpoint prior to the onset of apoptosis. Apoptosis is inhibited by association with RB1. Essential for early embryonic development. Required for normal gene expression during postnatal testis development. In Danio rerio (Zebrafish), this protein is THO complex subunit 1 (thoc1).